A 205-amino-acid chain; its full sequence is Small ribosomal subunit protein uS4 (205 aa).

The region spanning 95–158 is the S4 RNA-binding domain; it reads SRLDNIVYRM…TKSPLVKNFI (64 aa).

This sequence belongs to the universal ribosomal protein uS4 family. In terms of assembly, part of the 30S ribosomal subunit. Contacts protein S5. The interaction surface between S4 and S5 is involved in control of translational fidelity.

Functionally, one of the primary rRNA binding proteins, it binds directly to 16S rRNA where it nucleates assembly of the body of the 30S subunit. Its function is as follows. With S5 and S12 plays an important role in translational accuracy. This chain is Small ribosomal subunit protein uS4, found in Mycoplasma genitalium (strain ATCC 33530 / DSM 19775 / NCTC 10195 / G37) (Mycoplasmoides genitalium).